Consider the following 657-residue polypeptide: Polycomb protein suz12-A (657 aa).

Residues 335–363 (TAPVAKPLATRNSESSTVDSSKTSNIKPP) are disordered. Residues 347 to 358 (SESSTVDSSKTS) show a composition bias toward low complexity. The C2H2-type zinc finger occupies 413–436 (LHCPWCTLNCRKLYSLLKHLKLSH). A VEFS-box region spans residues 528–604 (RLYFHSDSCT…NQMNQACMSF (77 aa)).

This sequence belongs to the VEFS (VRN2-EMF2-FIS2-SU(Z)12) family. As to quaternary structure, component of the prc2/eed-ezh2 complex.

The protein localises to the nucleus. Its function is as follows. Polycomb group (PcG) protein. Component of the prc2/eed-ezh2 complex, which methylates 'Lys-9' and 'Lys-27' of histone H3, leading to transcriptional repression of the affected target gene. The protein is Polycomb protein suz12-A (suz12a) of Danio rerio (Zebrafish).